A 303-amino-acid chain; its full sequence is 4-hydroxy-3-methylbut-2-enyl diphosphate reductase (303 aa).

Residue Cys12 coordinates [4Fe-4S] cluster. His42 and His75 together coordinate (2E)-4-hydroxy-3-methylbut-2-enyl diphosphate. The dimethylallyl diphosphate site is built by His42 and His75. Residues His42 and His75 each coordinate isopentenyl diphosphate. Cys97 is a binding site for [4Fe-4S] cluster. Position 125 (His125) interacts with (2E)-4-hydroxy-3-methylbut-2-enyl diphosphate. His125 lines the dimethylallyl diphosphate pocket. His125 contacts isopentenyl diphosphate. The active-site Proton donor is Glu127. Ser164 contributes to the (2E)-4-hydroxy-3-methylbut-2-enyl diphosphate binding site. Residue Cys192 participates in [4Fe-4S] cluster binding. Ser220, Ser221, Asn222, and Ser264 together coordinate (2E)-4-hydroxy-3-methylbut-2-enyl diphosphate. Positions 220, 221, 222, and 264 each coordinate dimethylallyl diphosphate. The isopentenyl diphosphate site is built by Ser220, Ser221, Asn222, and Ser264.

Belongs to the IspH family. It depends on [4Fe-4S] cluster as a cofactor.

The catalysed reaction is isopentenyl diphosphate + 2 oxidized [2Fe-2S]-[ferredoxin] + H2O = (2E)-4-hydroxy-3-methylbut-2-enyl diphosphate + 2 reduced [2Fe-2S]-[ferredoxin] + 2 H(+). It catalyses the reaction dimethylallyl diphosphate + 2 oxidized [2Fe-2S]-[ferredoxin] + H2O = (2E)-4-hydroxy-3-methylbut-2-enyl diphosphate + 2 reduced [2Fe-2S]-[ferredoxin] + 2 H(+). It functions in the pathway isoprenoid biosynthesis; dimethylallyl diphosphate biosynthesis; dimethylallyl diphosphate from (2E)-4-hydroxy-3-methylbutenyl diphosphate: step 1/1. It participates in isoprenoid biosynthesis; isopentenyl diphosphate biosynthesis via DXP pathway; isopentenyl diphosphate from 1-deoxy-D-xylulose 5-phosphate: step 6/6. Its function is as follows. Catalyzes the conversion of 1-hydroxy-2-methyl-2-(E)-butenyl 4-diphosphate (HMBPP) into a mixture of isopentenyl diphosphate (IPP) and dimethylallyl diphosphate (DMAPP). Acts in the terminal step of the DOXP/MEP pathway for isoprenoid precursor biosynthesis. In Neorickettsia sennetsu (strain ATCC VR-367 / Miyayama) (Ehrlichia sennetsu), this protein is 4-hydroxy-3-methylbut-2-enyl diphosphate reductase.